The primary structure comprises 359 residues: Endoglucanase 1 (359 aa).

Disordered stretches follow at residues 1 to 26 and 47 to 72; these read MENP…RGGR and TGAS…DAGT. Residues 13-24 are compositionally biased toward basic residues; sequence LRRRRSERRARG. The segment covering 60 to 72 has biased composition (low complexity); the sequence is APSADSGTADAGT. D154 is a catalytic residue. C155 and C199 are oxidised to a cystine. D192 acts as the Proton donor in catalysis. D339 acts as the Nucleophile in catalysis.

This sequence belongs to the glycosyl hydrolase 6 (cellulase B) family.

The enzyme catalyses Endohydrolysis of (1-&gt;4)-beta-D-glucosidic linkages in cellulose, lichenin and cereal beta-D-glucans.. In terms of biological role, CMCase I preferentially hydrolyzes carboxymethyl cellulose (CMC). The polypeptide is Endoglucanase 1 (casA) (Streptomyces sp. (strain KSM-9)).